Here is a 92-residue protein sequence, read N- to C-terminus: Small ribosomal subunit protein bS21A (92 aa).

The segment covering 25–52 has biased composition (basic and acidic residues); it reads GVFREMKQRRSYEKPSERKTREKSEAIR. Residues 25-92 are disordered; that stretch reads GVFREMKQRR…LPQTAARPAG (68 aa).

Belongs to the bacterial ribosomal protein bS21 family.

This is Small ribosomal subunit protein bS21A from Bradyrhizobium diazoefficiens (strain JCM 10833 / BCRC 13528 / IAM 13628 / NBRC 14792 / USDA 110).